Reading from the N-terminus, the 183-residue chain is Lipid droplet coating protein Cap20 (183 aa).

This sequence belongs to the perilipin family.

The protein resides in the lipid droplet. Its function is as follows. Lipid droplet coating protein that regulates lipid metabolism, appressorial turgor pressure, and virulence. Appressorial turgor pressure is important for the mechanical penetration of the host cuticle during infection. In Colletotrichum gloeosporioides (Anthracnose fungus), this protein is Lipid droplet coating protein Cap20 (Cap20).